A 601-amino-acid polypeptide reads, in one-letter code: Invasin CotH3 (601 aa).

A signal peptide spans 1 to 17 (MKLSIISAAFLVAITHA). Residues asparagine 28, asparagine 85, asparagine 170, asparagine 324, asparagine 449, asparagine 527, asparagine 541, asparagine 554, asparagine 561, and asparagine 571 are each glycosylated (N-linked (GlcNAc...) asparagine). Residues 539 to 579 (SANGTTAAAPAPAAGNSTGKGGNQSISSSASSNKTSAQSTS) show a composition bias toward low complexity. A disordered region spans residues 539 to 581 (SANGTTAAAPAPAAGNSTGKGGNQSISSSASSNKTSAQSTSGA). The GPI-anchor amidated serine moiety is linked to residue serine 579. The propeptide at 580-601 (GASRSKTAPIVLAISALALLVF) is removed in mature form.

As to quaternary structure, interacts with HSPA5/BiP on the cell surface of host nasal epithelial cells.

The protein resides in the cell membrane. In terms of biological role, promotes invasion of host epithelial cells by adhering to receptors on the host cell surface to facilitate endocytosis of the pathogen into host cells. Binds HSPA5/BiP protein on the cell surface of host nasal epithelial cells. The sequence is that of Invasin CotH3 from Rhizopus delemar (strain RA 99-880 / ATCC MYA-4621 / FGSC 9543 / NRRL 43880) (Mucormycosis agent).